The following is a 143-amino-acid chain: MSVYQTYKGLPAGWVAQWDPTYQAYFYINETFEGAQPQWEPPIPGLHIPPPPGTTTVVYQKDVPRSSDGSRSMTAGLGGFMVGALAGSVLRGHRAYYAPPPPRGPLFGPRIGGGHHGPLHGPHGGFGGRGGGRMGGRGGRGRR.

Residues 9-44 (GLPAGWVAQWDPTYQAYFYINETFEGAQPQWEPPIP) enclose the WW domain. The tract at residues 115–143 (HHGPLHGPHGGFGGRGGGRMGGRGGRGRR) is disordered.

This chain is WW domain-containing protein C660.05, found in Schizosaccharomyces pombe (strain 972 / ATCC 24843) (Fission yeast).